A 251-amino-acid chain; its full sequence is MLAFLFYGLLLAACGSVTMSNPGESSFDLADRLDPVEKIDRLDLVEKIGDTHAKVLEIWMELGRRREVDAAEMHAICRVQPSATLPPDQPQITGLVLFRQLGPGSRLEAYFSLEGFPAEQNASNRAIHVHEFGDLSQGCDSTGPHYNPMEVPHPQHPGDFGNFVVRNGQLWRHRVGLTASLAGPHAILGRSVVVHAGEDDLGKGGNQASLQNGNAGRRLACCVVGTSSSAAWESQTKERKKRRRESECKTT.

The first 15 residues, 1 to 15 (MLAFLFYGLLLAACG), serve as a signal peptide directing secretion. Positions 16 to 24 (SVTMSNPGE) are excised as a propeptide. Intrachain disulfides connect Cys-77–Cys-222 and Cys-139–Cys-221. Asn-121 carries N-linked (GlcNAc...) asparagine glycosylation. The Cu cation site is built by His-128, His-130, and His-145. Zn(2+) is bound by residues His-145, His-153, His-156, and Asp-159. His-195 contacts Cu cation. The disordered stretch occupies residues 230–251 (AAWESQTKERKKRRRESECKTT).

This sequence belongs to the Cu-Zn superoxide dismutase family. As to quaternary structure, homotetramer. Directly interacts with ATP7A/MNK; this interaction is copper-dependent and is required for SOD3 activity. Cu cation is required as a cofactor. Requires Zn(2+) as cofactor.

It is found in the secreted. The protein resides in the extracellular space. Its subcellular location is the golgi apparatus. It localises to the trans-Golgi network. It carries out the reaction 2 superoxide + 2 H(+) = H2O2 + O2. Functionally, protect the extracellular space from toxic effect of reactive oxygen intermediates by converting superoxide radicals into hydrogen peroxide and oxygen. In Mus musculus (Mouse), this protein is Extracellular superoxide dismutase [Cu-Zn] (Sod3).